The chain runs to 92 residues: Small ribosomal subunit protein uS15c (92 aa).

It belongs to the universal ribosomal protein uS15 family. In terms of assembly, part of the 30S ribosomal subunit.

The protein resides in the plastid. It localises to the chloroplast. This is Small ribosomal subunit protein uS15c (rps15-A) from Lemna minor (Common duckweed).